The following is a 164-amino-acid chain: Choriogonadotropin subunit beta (164 aa).

An N-terminal signal peptide occupies residues 1 to 20 (MEMLQGLLLCLLLSTGGAWA). 6 disulfide bridges follow: Cys-29-Cys-77, Cys-43-Cys-92, Cys-46-Cys-130, Cys-54-Cys-108, Cys-58-Cys-110, and Cys-113-Cys-120. Residue Asn-50 is glycosylated (N-linked (GlcNAc...) asparagine). A disordered region spans residues 135-164 (FQDSSSKDPPRNLTSPSQLLEPADPPLVPQ). Ser-140 carries O-linked (GalNAc...) serine glycosylation. A glycan (N-linked (GlcNAc...) asparagine) is linked at Asn-146. Ser-151 is a glycosylation site (O-linked (GalNAc...) serine).

It belongs to the glycoprotein hormones subunit beta family. In terms of assembly, heterodimer of a common alpha chain and a unique beta chain which confers biological specificity to thyrotropin, lutropin, follitropin and gonadotropin. In terms of tissue distribution, placenta.

Its subcellular location is the secreted. Stimulates the ovaries to synthesize the steroids that are essential for the maintenance of pregnancy. In Callithrix jacchus (White-tufted-ear marmoset), this protein is Choriogonadotropin subunit beta (CGB).